Consider the following 410-residue polypeptide: Protein translocase subunit SecY (410 aa).

The next 9 membrane-spanning stretches (helical) occupy residues 61–81, 106–126, 135–155, 170–190, 195–215, 248–268, 289–309, 349–369, and 373–393; these read LSVF…IQIL, ITKY…VLRL, LYFI…VMWL, VIIF…QLFV, FLDF…IVFV, QGGV…DYVI, ILFL…YCSL, LFGS…EFVF, and VFKG…IDLI.

Belongs to the SecY/SEC61-alpha family. As to quaternary structure, component of the plastid Sec protein translocase complex, which is composed of at least SecY and SecE.

The protein resides in the plastid. It localises to the chloroplast thylakoid membrane. The central subunit of the protein translocation channel SecYE. Consists of two halves formed by TMs 1-5 and 6-10. These two domains form a lateral gate at the front which open onto the bilayer between TMs 2 and 7, and are clamped together by SecE at the back. The channel is closed by both a pore ring composed of hydrophobic SecY resides and a short helix (helix 2A) on the extracellular side of the membrane which forms a plug. The sequence is that of Protein translocase subunit SecY from Cyanidium caldarium (Red alga).